The sequence spans 384 residues: Anhydro-N-acetylmuramic acid kinase (384 aa).

9 to 16 serves as a coordination point for ATP; sequence GTSVDGID.

This sequence belongs to the anhydro-N-acetylmuramic acid kinase family.

The enzyme catalyses 1,6-anhydro-N-acetyl-beta-muramate + ATP + H2O = N-acetyl-D-muramate 6-phosphate + ADP + H(+). Its pathway is amino-sugar metabolism; 1,6-anhydro-N-acetylmuramate degradation. It participates in cell wall biogenesis; peptidoglycan recycling. In terms of biological role, catalyzes the specific phosphorylation of 1,6-anhydro-N-acetylmuramic acid (anhMurNAc) with the simultaneous cleavage of the 1,6-anhydro ring, generating MurNAc-6-P. Is required for the utilization of anhMurNAc either imported from the medium or derived from its own cell wall murein, and thus plays a role in cell wall recycling. This is Anhydro-N-acetylmuramic acid kinase from Rippkaea orientalis (strain PCC 8801 / RF-1) (Cyanothece sp. (strain PCC 8801)).